The sequence spans 112 residues: UPF0342 protein STER_0693 (112 aa).

It belongs to the UPF0342 family.

The chain is UPF0342 protein STER_0693 from Streptococcus thermophilus (strain ATCC BAA-491 / LMD-9).